The following is a 506-amino-acid chain: MTAYLIVFCLCCWSAARSANILAYFPTPSYSHQLVFRAYVELLAERGHAVTVIRPLTRVDFNRNAGNLTTIDLDGDGLLLLMKASTTHRKRGIVADTDTVTADNYEALVRMVDRQIHSEPFQRHLKSARRGYDLLVVEAFVDYALIASHLFGDVPVVQISSGHATAENFETMGATSRHPRYYPNLWRFNFGPLSVWDGVRELYTELRLQREFGLLADRQDALLKRRFGPEAPGLRELRSRVRLLFVNVHSVFDNNRPVPPSVQYLGGLHLHDRRAEPLSEAVARFLDESRRGVVYVSFGSGLATEDMDADMAAALLDAFKMMPYDVLWKHDGRVDGLTIPANVFVQKWFAQFEVLQHKNVKAFVTQAGVQSTDEAVENLVPLVGVPLMGDQAFNAHRYVELGIGVALDATRLTAADLARAVEQVTSDRAYRENLERLRRLLRHQCASPTHKAVWYTEHALRRDGDALKTKAANVDYAEYCMSDLLAPLLSVSLMSHLHSLIRMFVW.

Positions Met-1 to Ser-18 are cleaved as a signal peptide.

It belongs to the UDP-glycosyltransferase family.

Functionally, catalyzes the transfer of glucose from UDP-glucose to ecdysteroids which are insect molting hormones. Expression of egt interferes with normal insect development and block molting. In Lymantria dispar multicapsid nuclear polyhedrosis virus (LdMNPV), this protein is Ecdysteroid UDP-glucosyltransferase (EGT).